Here is a 247-residue protein sequence, read N- to C-terminus: ATP synthase subunit a, chloroplastic (247 aa).

The next 5 helical transmembrane spans lie at 38 to 58, 95 to 115, 134 to 154, 199 to 219, and 220 to 240; these read QVLI…TLAV, VPFI…GALL, INTT…AGIS, LVVV…VMFL, and GLFT…AYIG.

The protein belongs to the ATPase A chain family. In terms of assembly, F-type ATPases have 2 components, CF(1) - the catalytic core - and CF(0) - the membrane proton channel. CF(1) has five subunits: alpha(3), beta(3), gamma(1), delta(1), epsilon(1). CF(0) has four main subunits: a, b, b' and c.

Its subcellular location is the plastid. It localises to the chloroplast thylakoid membrane. Key component of the proton channel; it plays a direct role in the translocation of protons across the membrane. This chain is ATP synthase subunit a, chloroplastic, found in Daucus carota (Wild carrot).